The chain runs to 245 residues: Probable septum site-determining protein MinC (245 aa).

Residues 113 to 132 (RERPLEPLVGEEKKKPEKPP) show a composition bias toward basic and acidic residues. Positions 113–138 (RERPLEPLVGEEKKKPEKPPEPTIKP) are disordered.

This sequence belongs to the MinC family. Interacts with MinD and FtsZ.

Functionally, cell division inhibitor that blocks the formation of polar Z ring septums. Rapidly oscillates between the poles of the cell to destabilize FtsZ filaments that have formed before they mature into polar Z rings. Prevents FtsZ polymerization. This chain is Probable septum site-determining protein MinC, found in Pseudomonas fluorescens (strain SBW25).